A 141-amino-acid polypeptide reads, in one-letter code: Hemoglobin subunit alpha-2 (141 aa).

The 141-residue stretch at 1-141 (VLSSQDKANV…VKHVLTSKYR (141 aa)) folds into the Globin domain. His58 is an O2 binding site. Residue His87 coordinates heme b.

Belongs to the globin family. Minor hemoglobin is a heterotetramer of two alpha-2 chains and two beta-2 chains. As to expression, red blood cells.

Functionally, involved in oxygen transport from the lung to the various peripheral tissues. The protein is Hemoglobin subunit alpha-2 of Triturus cristatus (Great crested newt).